A 165-amino-acid polypeptide reads, in one-letter code: Nucleotide-binding protein Ctha_0558 (165 aa).

It belongs to the YajQ family.

Nucleotide-binding protein. The chain is Nucleotide-binding protein Ctha_0558 from Chloroherpeton thalassium (strain ATCC 35110 / GB-78).